The sequence spans 129 residues: Aspartate 1-decarboxylase (129 aa).

Catalysis depends on Ser25, which acts as the Schiff-base intermediate with substrate; via pyruvic acid. Ser25 bears the Pyruvic acid (Ser) mark. Thr57 is a substrate binding site. The active-site Proton donor is the Tyr58. Gly73 to Ala75 is a binding site for substrate.

This sequence belongs to the PanD family. In terms of assembly, heterooctamer of four alpha and four beta subunits. Requires pyruvate as cofactor. Post-translationally, is synthesized initially as an inactive proenzyme, which is activated by self-cleavage at a specific serine bond to produce a beta-subunit with a hydroxyl group at its C-terminus and an alpha-subunit with a pyruvoyl group at its N-terminus.

It localises to the cytoplasm. It catalyses the reaction L-aspartate + H(+) = beta-alanine + CO2. Its pathway is cofactor biosynthesis; (R)-pantothenate biosynthesis; beta-alanine from L-aspartate: step 1/1. In terms of biological role, catalyzes the pyruvoyl-dependent decarboxylation of aspartate to produce beta-alanine. This Prosthecochloris aestuarii (strain DSM 271 / SK 413) protein is Aspartate 1-decarboxylase.